The following is a 702-amino-acid chain: Vertnin (702 aa).

Positions 562–625 (VPTLGKGGQE…QGQPHSGPLL (64 aa)) are disordered. Residues 570–582 (QEAEEKQEKEAGR) are compositionally biased toward basic and acidic residues.

This sequence belongs to the vertnin family.

The protein resides in the nucleus. Acts as a transcription factor that regulates development of thoracic vertebrae. This is Vertnin from Homo sapiens (Human).